The chain runs to 890 residues: Translation initiation factor IF-2 (890 aa).

The tract at residues 45–302 (LIDHLNQKNS…SSLQQGFQKP (258 aa)) is disordered. The segment covering 67-81 (STLNIPSTGGKSKSV) has biased composition (polar residues). Basic and acidic residues predominate over residues 92–217 (VKRDPQEAER…RMAEENKWTD (126 aa)). Residues 252–266 (GRGRNAKAARPKKGN) show a composition bias toward basic residues. Over residues 267–280 (KHAESKADREEARA) the composition is skewed to basic and acidic residues. In terms of domain architecture, tr-type G spans 389 to 558 (PRAPVVTIMG…LLQAEVLELK (170 aa)). A G1 region spans residues 398–405 (GHVDHGKT). GTP is bound at residue 398–405 (GHVDHGKT). The segment at 423-427 (GITQH) is G2. Residues 444 to 447 (DTPG) form a G3 region. GTP contacts are provided by residues 444–448 (DTPGH) and 498–501 (NKID). The interval 498–501 (NKID) is G4. The interval 534 to 536 (SAK) is G5. Lys-808 is subject to N6-acetyllysine.

It belongs to the TRAFAC class translation factor GTPase superfamily. Classic translation factor GTPase family. IF-2 subfamily.

The protein localises to the cytoplasm. Its function is as follows. One of the essential components for the initiation of protein synthesis. Protects formylmethionyl-tRNA from spontaneous hydrolysis and promotes its binding to the 30S ribosomal subunits. Also involved in the hydrolysis of GTP during the formation of the 70S ribosomal complex. The polypeptide is Translation initiation factor IF-2 (Shigella dysenteriae serotype 1 (strain Sd197)).